We begin with the raw amino-acid sequence, 331 residues long: UDP-galactose/UDP-glucose transporter 3 (331 aa).

The next 8 membrane-spanning stretches (helical) occupy residues 11 to 31 (VLLL…QGIL), 49 to 69 (HLAF…YIMI), 80 to 100 (APWW…AMGI), 112 to 132 (VLAK…VYGI), 135 to 155 (TLPE…FALL), 170 to 190 (APLG…TNAT), 206 to 226 (IMLG…FGLP), and 245 to 265 (WDIL…FLTI). A Di-lysine motif motif is present at residues 327–331 (KKKKA).

The protein belongs to the nucleotide-sugar transporter family. UDP-galactose:UMP antiporter (TC 2.A.7.11) subfamily. In terms of tissue distribution, mostly expressed in flowers, and, to a lower extent, in roots, stems and leaves.

Its subcellular location is the endoplasmic reticulum membrane. The protein resides in the golgi apparatus membrane. Essential sugar transporter required for the transport of UDP-glucose from the cytoplasm into the Golgi and the endoplasmic reticulum. Essential for pollen development and involved in embryo sac progress. The sequence is that of UDP-galactose/UDP-glucose transporter 3 from Arabidopsis thaliana (Mouse-ear cress).